The following is a 122-amino-acid chain: Small ribosomal subunit protein uS13 (122 aa).

The segment at 97-122 is disordered; that stretch reads PVRGQRTKTNARTRKGPARTVAGKKK.

Belongs to the universal ribosomal protein uS13 family. Part of the 30S ribosomal subunit. Forms a loose heterodimer with protein S19. Forms two bridges to the 50S subunit in the 70S ribosome.

In terms of biological role, located at the top of the head of the 30S subunit, it contacts several helices of the 16S rRNA. In the 70S ribosome it contacts the 23S rRNA (bridge B1a) and protein L5 of the 50S subunit (bridge B1b), connecting the 2 subunits; these bridges are implicated in subunit movement. Contacts the tRNAs in the A and P-sites. This chain is Small ribosomal subunit protein uS13, found in Pelobacter propionicus (strain DSM 2379 / NBRC 103807 / OttBd1).